Consider the following 450-residue polypeptide: NADP-specific glutamate dehydrogenase (450 aa).

Residue Lys114 is part of the active site.

The protein belongs to the Glu/Leu/Phe/Val dehydrogenases family. As to quaternary structure, homohexamer.

It catalyses the reaction L-glutamate + NADP(+) + H2O = 2-oxoglutarate + NH4(+) + NADPH + H(+). The chain is NADP-specific glutamate dehydrogenase (gdhA) from Botryotinia fuckeliana (Noble rot fungus).